The following is a 239-amino-acid chain: 1-(5-phosphoribosyl)-5-[(5-phosphoribosylamino)methylideneamino] imidazole-4-carboxamide isomerase (239 aa).

Asp-9 acts as the Proton acceptor in catalysis. Asp-131 functions as the Proton donor in the catalytic mechanism.

It belongs to the HisA/HisF family.

The protein localises to the cytoplasm. It catalyses the reaction 1-(5-phospho-beta-D-ribosyl)-5-[(5-phospho-beta-D-ribosylamino)methylideneamino]imidazole-4-carboxamide = 5-[(5-phospho-1-deoxy-D-ribulos-1-ylimino)methylamino]-1-(5-phospho-beta-D-ribosyl)imidazole-4-carboxamide. Its pathway is amino-acid biosynthesis; L-histidine biosynthesis; L-histidine from 5-phospho-alpha-D-ribose 1-diphosphate: step 4/9. This chain is 1-(5-phosphoribosyl)-5-[(5-phosphoribosylamino)methylideneamino] imidazole-4-carboxamide isomerase, found in Parabacteroides distasonis (strain ATCC 8503 / DSM 20701 / CIP 104284 / JCM 5825 / NCTC 11152).